The chain runs to 212 residues: F420-dependent NADP reductase (212 aa).

Residues 9–12, 31–32, K36, I72, H76, V98, and A137 each bind NADP(+); these read TGNL and SR. Coenzyme F420-(gamma-Glu)n is bound at residue L207.

The protein belongs to the F420-dependent NADP reductase family. As to quaternary structure, homodimer.

It carries out the reaction reduced coenzyme F420-(gamma-L-Glu)(n) + NADP(+) = oxidized coenzyme F420-(gamma-L-Glu)(n) + NADPH + 2 H(+). Functionally, catalyzes the reversible reduction of NADP(+) by F420H(2). In this reaction the proS hydrogen at C5 of F420 is transferred into the proS position at C4 of NADPH. The sequence is that of F420-dependent NADP reductase (fno) from Archaeoglobus fulgidus (strain ATCC 49558 / DSM 4304 / JCM 9628 / NBRC 100126 / VC-16).